We begin with the raw amino-acid sequence, 107 residues long: Large ribosomal subunit protein uL24 (107 aa).

It belongs to the universal ribosomal protein uL24 family. Part of the 50S ribosomal subunit.

In terms of biological role, one of two assembly initiator proteins, it binds directly to the 5'-end of the 23S rRNA, where it nucleates assembly of the 50S subunit. Functionally, one of the proteins that surrounds the polypeptide exit tunnel on the outside of the subunit. The sequence is that of Large ribosomal subunit protein uL24 from Mesomycoplasma hyopneumoniae (strain 7448) (Mycoplasma hyopneumoniae).